Here is a 1241-residue protein sequence, read N- to C-terminus: MLVARSGCSRTLIRMGNDENLMVMVDVEEGEIPDSVNTEIEVKHKSTTTTADVGGDVDVGVVAGGRGGGGGGSNGNSRVWTMEELISQYPAYRPYANSGLSNLAWARAVQNKPFNEGLVMDYEPRESDKIVIEDSDDEKEEGELEEGEIDLVDNASDDNLVEKDTESVVLISADKVEDDRILKERDLEKKVKLIRGVLESTSLVEAQTGFEGVCSRILGALESLRELVSDNDDFPKRDTLVQLSFASLQTINYVFCSMNNISKERNKETMSRLLTLVNDHFSQFLSFNQKNEIETMNQDLSRSAIAVFAGTSSEENVNQMTQPSNGDSFLAKKLTSESTHRGAAYLRSRLPMLPLLDLHKDHDADSLPSPTRETTPSLPVNGRHTMVRPGFPVGRESQTTEGAKVYSYESDARKAVSTYQQKFGLNSVFKTDDLPSPTPSGEPNDGNGDVGGEVSSSVVKSSNPGSHLIYGQDVPLPSNFNSRSMPVANSVSSTVPPHHLSIHAISAPTASDQTVKPSAKSRDPRLRLAKPDAANVTIYSYSSGDARNLSKVELSADLVNPRKQKAADEFLIDGPAWKRQKSDTDAPKAAGTGGWLEDTESSGLLKLESKPRLIENGVTSMTSSVMPTSAVSVSQKVRTASTDTASLQSLLKDIAVNPTMLLNLLKMGERQKVPEKAIQKPMDPRRAAQLPGSSVQPGVSTPLSIPASNALAANSLNSGVLQDSSQNAPAAESGSIRMKPRDPRRILHGSTLQRTDSSMEKQTKVNDPSTLGTLTMKGKAEDLETPPQLDPRQNISQNGTSKMKISGELLSGKTPDFSTQFTKNLKSIADMVVVSQQLGNPPASMHSVQLKTERDVKHNPSNPNAQDEDVSVSAASVTAAAGPTRSMNSWGDVEHLFEGYDDIQRVAIQRERVRRLEEQNKMFASQKLSLVLDIDHTLLNSAKFNEVESRHEEILRKKEEQDREKPYRHLFRFLHMGMWTKLRPGIWNFLEKASKLYELHLYTMGNKLYATEMAKLLDPKGVLFNGRVISKGDDGDPLDGDERVPKSKDLEGVMGMESSVVIIDDSVRVWPQHKMNLIAVERYLYFPCSRRQFGLLGPSLLELDRDEVPEEGTLASSLAVIEKIHQNFFSHTSLDEVDVRNILASEQRKILAGCRIVFSRIIPVGEAKPHLHPLWQTAEQFGAVCTTQVDEHVTHVVTNSLGTDKVNWALTRGRFVVHPGWVEASAFLYQRANENLYAINP.

Disordered stretches follow at residues 361–402, 428–470, 505–525, 578–598, 677–702, 720–800, and 852–885; these read DHDA…TTEG, VFKT…HLIY, ISAP…RDPR, KRQK…WLED, AIQK…VSTP, VLQD…QNGT, and TERD…GPTR. Positions 368-378 are enriched in polar residues; sequence PSPTRETTPSL. Residues 441–466 are compositionally biased toward low complexity; sequence GEPNDGNGDVGGEVSSSVVKSSNPGS. Positions 677–686 are enriched in basic and acidic residues; that stretch reads AIQKPMDPRR. Composition is skewed to polar residues over residues 691 to 702 and 791 to 800; these read PGSSVQPGVSTP and PRQNISQNGT. Residues 871–881 show a composition bias toward low complexity; the sequence is SVSAASVTAAA. Residues 923 to 1103 enclose the FCP1 homology domain; that stretch reads FASQKLSLVL…GLLGPSLLEL (181 aa). In terms of domain architecture, BRCT spans 1146–1239; the sequence is EQRKILAGCR…QRANENLYAI (94 aa).

As to quaternary structure, interacts with RAP74. Requires Mg(2+) as cofactor. It depends on Co(2+) as a cofactor. Mn(2+) serves as cofactor.

The protein localises to the nucleus. The enzyme catalyses O-phospho-L-seryl-[protein] + H2O = L-seryl-[protein] + phosphate. It carries out the reaction O-phospho-L-threonyl-[protein] + H2O = L-threonyl-[protein] + phosphate. In terms of biological role, completely dephosphorylates 'Ser-2', and partially 'Ser-5' and 'Ser-7' of the heptad repeats YSPTSPS in the C-terminal domain (CTD) of the largest RNA polymerase II subunit (RPB1). Involved in defense response. Acts as a negative regulator of immune gene expression and immunity to pathogen infections. Preferentially dephosphorylates 'Ser-2' of RNA polymerase II CTD. This counterregulates the MAP kinase (MAPK) or cyclin-dependent kinase C (CDKC)-mediated phosphorylation of CTD in response to pathogens and upon perception of microbe-associated molecular patterns (MAMPs). MAPKs phosphorylate and activate CDKCs, which are CTD kinases that positively regulate plant innate immunity. Acts as a negative regulator of stress gene transcription involved in abscisic acid (ABA) mediated signaling pathway and cold resistance. Acts as a post-transcriptional gene silencing (PTGS) suppressor. The chain is RNA polymerase II C-terminal domain phosphatase-like 3 from Arabidopsis thaliana (Mouse-ear cress).